A 217-amino-acid chain; its full sequence is Oxygen-insensitive NAD(P)H nitroreductase (217 aa).

Position 10 to 14 (10 to 14 (RHSTK)) interacts with FMN. NAD(+)-binding residues include Lys14, Thr41, Thr67, Asn71, Lys74, and Arg107. Asn71 lines the FMN pocket. FMN is bound by residues 165–166 (EG) and 205–207 (KSR).

It belongs to the nitroreductase family. Homodimer. Requires FMN as cofactor.

Functionally, reduction of a variety of nitroaromatic compounds using NADH (and to lesser extent NADPH) as source of reducing equivalents; two electrons are transferred. This Enterobacter cloacae protein is Oxygen-insensitive NAD(P)H nitroreductase.